The sequence spans 405 residues: Saccharopepsin (405 aa).

A signal peptide spans 1 to 22 (MFSLKALLPLALLLVSANQVAA). The propeptide at 23–76 (KVHKAKIYKHELSDEMKEVTFEQHLAHLGQKYLTQFEKANPEVVFSREHPFFTE) is activation peptide. The Peptidase A1 domain occupies 91 to 402 (YYTDITLGTP…DLGNNAVGLA (312 aa)). The active site involves Asp-109. An intrachain disulfide couples Cys-122 to Cys-127. N-linked (GlcNAc...) asparagine glycosylation is present at Asn-144. Asp-294 is an active-site residue. Cysteines 328 and 361 form a disulfide. N-linked (GlcNAc...) asparagine glycosylation occurs at Asn-345.

The protein belongs to the peptidase A1 family.

The protein resides in the vacuole. The enzyme catalyses Hydrolysis of proteins with broad specificity for peptide bonds. Cleaves -Leu-Leu-|-Val-Tyr- bond in a synthetic substrate. Does not act on esters of Tyr or Arg.. Functionally, aspartyl protease implicated in the post-translational regulation of S.cerevisiae vacuolar proteinases. Acts on YSCB, on YSCY and on itself. The sequence is that of Saccharopepsin (PEP4) from Saccharomyces cerevisiae (strain ATCC 204508 / S288c) (Baker's yeast).